We begin with the raw amino-acid sequence, 432 residues long: Enolase (432 aa).

Position 167 (Gln167) interacts with (2R)-2-phosphoglycerate. Glu209 (proton donor) is an active-site residue. Positions 246, 290, and 317 each coordinate Mg(2+). 4 residues coordinate (2R)-2-phosphoglycerate: Lys342, Arg371, Ser372, and Lys393. Lys342 serves as the catalytic Proton acceptor.

The protein belongs to the enolase family. In terms of assembly, component of the RNA degradosome, a multiprotein complex involved in RNA processing and mRNA degradation. Mg(2+) is required as a cofactor.

The protein resides in the cytoplasm. It is found in the secreted. Its subcellular location is the cell surface. The catalysed reaction is (2R)-2-phosphoglycerate = phosphoenolpyruvate + H2O. Its pathway is carbohydrate degradation; glycolysis; pyruvate from D-glyceraldehyde 3-phosphate: step 4/5. In terms of biological role, catalyzes the reversible conversion of 2-phosphoglycerate (2-PG) into phosphoenolpyruvate (PEP). It is essential for the degradation of carbohydrates via glycolysis. This chain is Enolase, found in Klebsiella pneumoniae subsp. pneumoniae (strain ATCC 700721 / MGH 78578).